Reading from the N-terminus, the 135-residue chain is Small ribosomal subunit protein eS6 (135 aa).

This sequence belongs to the eukaryotic ribosomal protein eS6 family.

In Halorubrum lacusprofundi (strain ATCC 49239 / DSM 5036 / JCM 8891 / ACAM 34), this protein is Small ribosomal subunit protein eS6.